The sequence spans 412 residues: Dihydrolipoyllysine-residue acetyltransferase component of pyruvate dehydrogenase complex (412 aa).

The region spanning 2 to 78 (PIKILMPALS…PVNSLIAVLS (77 aa)) is the Lipoyl-binding domain. Lys-43 bears the N6-lipoyllysine mark. The region spanning 132–169 (FASPLAKRLAKMRNIRFESVKGSGPHGRIVKQDILSYT) is the Peripheral subunit-binding (PSBD) domain. The active site involves His-385.

It belongs to the 2-oxoacid dehydrogenase family. Forms a 24-polypeptide structural core with octahedral symmetry. (R)-lipoate is required as a cofactor.

The enzyme catalyses N(6)-[(R)-dihydrolipoyl]-L-lysyl-[protein] + acetyl-CoA = N(6)-[(R)-S(8)-acetyldihydrolipoyl]-L-lysyl-[protein] + CoA. The pyruvate dehydrogenase complex catalyzes the overall conversion of pyruvate to acetyl-CoA and CO(2). It contains multiple copies of three enzymatic components: pyruvate dehydrogenase (E1), dihydrolipoamide acetyltransferase (E2) and lipoamide dehydrogenase (E3). The chain is Dihydrolipoyllysine-residue acetyltransferase component of pyruvate dehydrogenase complex (pdhC) from Rickettsia conorii (strain ATCC VR-613 / Malish 7).